The sequence spans 33 residues: Photosystem II reaction center protein Psb30 (33 aa).

The helical transmembrane segment at 7 to 27 (IQLGSLTLITLTGPLIIGIIF) threads the bilayer.

This sequence belongs to the Psb30/Ycf12 family. In terms of assembly, PSII is composed of 1 copy each of membrane proteins PsbA, PsbB, PsbC, PsbD, PsbE, PsbF, PsbH, PsbI, PsbJ, PsbK, PsbL, PsbM, PsbT, PsbY, PsbZ, Psb30/Ycf12, peripheral proteins of the oxygen-evolving complex and a large number of cofactors. It forms dimeric complexes.

The protein localises to the plastid. Its subcellular location is the chloroplast thylakoid membrane. Its function is as follows. A core subunit of photosystem II (PSII), probably helps stabilize the reaction center. In Euglena gracilis, this protein is Photosystem II reaction center protein Psb30.